A 250-amino-acid polypeptide reads, in one-letter code: HTH-type transcriptional regulator KipR (250 aa).

One can recognise an HTH iclR-type domain in the interval 5 to 65 (NKTVVKSMAL…DASGAYSLGL (61 aa)). Residues 26-45 (LSELVSLTGMPKTSVHRMVS) constitute a DNA-binding region (H-T-H motif). Residues 80–249 (IRKIAKPVME…ALQISRKIGY (170 aa)) enclose the IclR-ED domain.

In terms of biological role, transcriptional repressor of the kip gene-containing operon. The protein is HTH-type transcriptional regulator KipR (kipR) of Bacillus subtilis (strain 168).